The chain runs to 320 residues: tRNA U34 carboxymethyltransferase (320 aa).

Residues Lys-89, Trp-103, Lys-108, Gly-128, 150-152 (DPT), 179-180 (IE), Met-194, Tyr-198, and Arg-313 contribute to the carboxy-S-adenosyl-L-methionine site.

Belongs to the class I-like SAM-binding methyltransferase superfamily. CmoB family. Homotetramer.

It catalyses the reaction carboxy-S-adenosyl-L-methionine + 5-hydroxyuridine(34) in tRNA = 5-carboxymethoxyuridine(34) in tRNA + S-adenosyl-L-homocysteine + H(+). In terms of biological role, catalyzes carboxymethyl transfer from carboxy-S-adenosyl-L-methionine (Cx-SAM) to 5-hydroxyuridine (ho5U) to form 5-carboxymethoxyuridine (cmo5U) at position 34 in tRNAs. This is tRNA U34 carboxymethyltransferase from Actinobacillus pleuropneumoniae serotype 3 (strain JL03).